A 437-amino-acid polypeptide reads, in one-letter code: Na(+)/H(+) antiporter NhaA (437 aa).

Transmembrane regions (helical) follow at residues 29 to 49 (TAGI…NTAW), 74 to 94 (LKHW…ALEL), 111 to 131 (LPVA…LLLV), 139 to 159 (GWGT…ALLG), 168 to 188 (LFLL…VAVG), 196 to 216 (VALG…LLGI), 229 to 249 (IWLA…ILGL), 307 to 327 (IALH…SNAG), 341 to 361 (IAIV…FSFL), 376 to 396 (WSLL…ALFI), and 411 to 431 (LGVL…LTLL).

This sequence belongs to the NhaA Na(+)/H(+) (TC 2.A.33) antiporter family.

The protein resides in the cell inner membrane. The enzyme catalyses Na(+)(in) + 2 H(+)(out) = Na(+)(out) + 2 H(+)(in). In terms of biological role, na(+)/H(+) antiporter that extrudes sodium in exchange for external protons. The protein is Na(+)/H(+) antiporter NhaA of Rhizobium meliloti (strain 1021) (Ensifer meliloti).